Consider the following 203-residue polypeptide: Large ribosomal subunit protein uL18 (203 aa).

This sequence belongs to the universal ribosomal protein uL18 family. In terms of assembly, part of the 50S ribosomal subunit. Contacts the 5S and 23S rRNAs.

This is one of the proteins that bind and probably mediate the attachment of the 5S RNA into the large ribosomal subunit, where it forms part of the central protuberance. The polypeptide is Large ribosomal subunit protein uL18 (Pyrococcus furiosus (strain ATCC 43587 / DSM 3638 / JCM 8422 / Vc1)).